The sequence spans 686 residues: ATP-dependent zinc metalloprotease FtsH 1 (686 aa).

Topologically, residues 1–33 (MCFCIVSSPEAMHSNADSPSSGPGLQPVWTTLR) are cytoplasmic. Residues 34–54 (SPYVFWIGGAILLALLVHLGI) form a helical membrane-spanning segment. The Periplasmic portion of the chain corresponds to 55–164 (KWQQASAPVR…TFAATQESDW (110 aa)). Residues 165–185 (VGTLLLWGLPLGLIVGIWLFF) traverse the membrane as a helical segment. The Cytoplasmic segment spans residues 186 to 686 (MRRMATGGRE…AEGASPSSQG (501 aa)). ATP is bound at residue 257 to 264 (GPPGTGKT). Histidine 479 provides a ligand contact to Zn(2+). Glutamate 480 is an active-site residue. Residues histidine 483 and aspartate 555 each coordinate Zn(2+). A disordered region spans residues 661 to 686 (YAWLKEGDGTSRNSASAEGASPSSQG). The span at 670–686 (TSRNSASAEGASPSSQG) shows a compositional bias: polar residues.

It in the central section; belongs to the AAA ATPase family. In the C-terminal section; belongs to the peptidase M41 family. Homohexamer. It depends on Zn(2+) as a cofactor.

The protein resides in the cell inner membrane. In terms of biological role, acts as a processive, ATP-dependent zinc metallopeptidase for both cytoplasmic and membrane proteins. Plays a role in the quality control of integral membrane proteins. The polypeptide is ATP-dependent zinc metalloprotease FtsH 1 (Salinibacter ruber (strain M8)).